The chain runs to 618 residues: 1-deoxy-D-xylulose-5-phosphate synthase (618 aa).

Thiamine diphosphate is bound by residues His-74 and Gly-115–Ser-117. Residue Asp-146 participates in Mg(2+) binding. Thiamine diphosphate-binding positions include Gly-147–Ala-148, Asn-175, Tyr-286, and Glu-366. A Mg(2+)-binding site is contributed by Asn-175.

The protein belongs to the transketolase family. DXPS subfamily. Homodimer. Requires Mg(2+) as cofactor. Thiamine diphosphate serves as cofactor.

It catalyses the reaction D-glyceraldehyde 3-phosphate + pyruvate + H(+) = 1-deoxy-D-xylulose 5-phosphate + CO2. The protein operates within metabolic intermediate biosynthesis; 1-deoxy-D-xylulose 5-phosphate biosynthesis; 1-deoxy-D-xylulose 5-phosphate from D-glyceraldehyde 3-phosphate and pyruvate: step 1/1. Functionally, catalyzes the acyloin condensation reaction between C atoms 2 and 3 of pyruvate and glyceraldehyde 3-phosphate to yield 1-deoxy-D-xylulose-5-phosphate (DXP). This is 1-deoxy-D-xylulose-5-phosphate synthase from Clostridium tetani (strain Massachusetts / E88).